A 452-amino-acid polypeptide reads, in one-letter code: Na(+)/H(+) antiporter NhaA (452 aa).

11 helical membrane passes run 23 to 43 (MMLF…LSTI), 71 to 91 (LLQF…GLEI), 108 to 128 (LPIV…LLVV), 136 to 156 (GAAI…AVLG), 165 to 185 (VFLT…IALF), 189 to 209 (HINI…YLMG), 216 to 236 (LGLY…SGIH), 316 to 336 (IVGY…TLGG), 349 to 369 (VFLG…YGFV), 385 to 405 (LMAV…IATL), and 418 to 438 (EAKL…IVTL).

This sequence belongs to the NhaA Na(+)/H(+) (TC 2.A.33) antiporter family.

It is found in the cell inner membrane. It catalyses the reaction Na(+)(in) + 2 H(+)(out) = Na(+)(out) + 2 H(+)(in). In terms of biological role, na(+)/H(+) antiporter that extrudes sodium in exchange for external protons. The polypeptide is Na(+)/H(+) antiporter NhaA (Porphyromonas gingivalis (strain ATCC BAA-308 / W83)).